We begin with the raw amino-acid sequence, 233 residues long: Biosynthetic peptidoglycan transglycosylase (233 aa).

A helical membrane pass occupies residues 8–28; that stretch reads LIALPVGIFIFFNAYVYGNII.

The protein belongs to the glycosyltransferase 51 family.

The protein resides in the cell inner membrane. It carries out the reaction [GlcNAc-(1-&gt;4)-Mur2Ac(oyl-L-Ala-gamma-D-Glu-L-Lys-D-Ala-D-Ala)](n)-di-trans,octa-cis-undecaprenyl diphosphate + beta-D-GlcNAc-(1-&gt;4)-Mur2Ac(oyl-L-Ala-gamma-D-Glu-L-Lys-D-Ala-D-Ala)-di-trans,octa-cis-undecaprenyl diphosphate = [GlcNAc-(1-&gt;4)-Mur2Ac(oyl-L-Ala-gamma-D-Glu-L-Lys-D-Ala-D-Ala)](n+1)-di-trans,octa-cis-undecaprenyl diphosphate + di-trans,octa-cis-undecaprenyl diphosphate + H(+). The protein operates within cell wall biogenesis; peptidoglycan biosynthesis. In terms of biological role, peptidoglycan polymerase that catalyzes glycan chain elongation from lipid-linked precursors. This is Biosynthetic peptidoglycan transglycosylase from Neisseria gonorrhoeae (strain ATCC 700825 / FA 1090).